A 258-amino-acid chain; its full sequence is MLAKRIIPCLDVRDGQVVKGVQFRNHEIIGDIVPLAKRYADEGADELVFYDITASSDGRVVDKSWVSRVAEVIDIPFCVAGGIRSIDDAAKILSFGADKISINSPALADPTLITRLADRFGVQCIVVGIDTWFDAETGKYHVNQYTGDESRTRVTQWETLDWVQEVQKRGAGEIVLNMMNQDGVRNGYDLEQLKKVRDVCHVPLIASGGAGTMEHFLEAFRDTDVDGALAASVFHKQIINIGELKAYLEAQGVEIRIC.

Catalysis depends on residues aspartate 11 and aspartate 130.

It belongs to the HisA/HisF family. In terms of assembly, heterodimer of HisH and HisF.

The protein localises to the cytoplasm. It carries out the reaction 5-[(5-phospho-1-deoxy-D-ribulos-1-ylimino)methylamino]-1-(5-phospho-beta-D-ribosyl)imidazole-4-carboxamide + L-glutamine = D-erythro-1-(imidazol-4-yl)glycerol 3-phosphate + 5-amino-1-(5-phospho-beta-D-ribosyl)imidazole-4-carboxamide + L-glutamate + H(+). Its pathway is amino-acid biosynthesis; L-histidine biosynthesis; L-histidine from 5-phospho-alpha-D-ribose 1-diphosphate: step 5/9. Functionally, IGPS catalyzes the conversion of PRFAR and glutamine to IGP, AICAR and glutamate. The HisF subunit catalyzes the cyclization activity that produces IGP and AICAR from PRFAR using the ammonia provided by the HisH subunit. This chain is Imidazole glycerol phosphate synthase subunit HisF, found in Citrobacter koseri (strain ATCC BAA-895 / CDC 4225-83 / SGSC4696).